A 328-amino-acid polypeptide reads, in one-letter code: dITP/XTP pyrophosphatase (328 aa).

The segment at 1 to 129 is unknown; the sequence is MSEKIYEYKD…ATSEQGFGDI (129 aa). Residues 130–324 form an NTP pyrophosphatase region; the sequence is ILIATRNEGK…KLMEVFPAWQ (195 aa). A substrate-binding site is contributed by 134-139; the sequence is TRNEGK. Asp-196 serves as the catalytic Proton acceptor. Position 196 (Asp-196) interacts with Mg(2+). Substrate contacts are provided by residues Ser-197, 280 to 283, Lys-303, and 308 to 309; these read FGYD and HR.

Belongs to the HAM1 NTPase family. As to quaternary structure, homodimer. The cofactor is Mg(2+).

It catalyses the reaction XTP + H2O = XMP + diphosphate + H(+). It carries out the reaction dITP + H2O = dIMP + diphosphate + H(+). The enzyme catalyses ITP + H2O = IMP + diphosphate + H(+). Pyrophosphatase that catalyzes the hydrolysis of nucleoside triphosphates to their monophosphate derivatives, with a high preference for the non-canonical purine nucleotides XTP (xanthosine triphosphate), dITP (deoxyinosine triphosphate) and ITP. Seems to function as a house-cleaning enzyme that removes non-canonical purine nucleotides from the nucleotide pool, thus preventing their incorporation into DNA/RNA and avoiding chromosomal lesions. This Streptococcus pyogenes serotype M3 (strain ATCC BAA-595 / MGAS315) protein is dITP/XTP pyrophosphatase.